The following is a 64-amino-acid chain: Large ribosomal subunit protein uL29 (64 aa).

It belongs to the universal ribosomal protein uL29 family.

This Ralstonia pickettii (strain 12J) protein is Large ribosomal subunit protein uL29.